The chain runs to 83 residues: Toxin TdNa5 (83 aa).

The N-terminal stretch at 1-20 (MKTIIFFIACLMLIDVVVES) is a signal peptide. Residues 21–82 (KDGYIIEHRG…IFDSNNNKCG (62 aa)) form the LCN-type CS-alpha/beta domain. Cystine bridges form between Cys31/Cys81, Cys35/Cys57, Cys43/Cys62, and Cys47/Cys64. Cys81 bears the Cysteine amide mark.

It belongs to the long (4 C-C) scorpion toxin superfamily. Sodium channel inhibitor family. Beta subfamily. In terms of tissue distribution, expressed by the venom gland.

The protein localises to the secreted. Inhibits the sodium currents (Nav) in an apparent irreversible manner. Produces small depolarization and induces repetitive firing in squid axons. Is specific for arthropods (crickets, triatomides, crabs and squids), but is non-toxic to mice. Shows antibacterial activity against both Gram-positive and Gram-negative bacteria. This Tityus discrepans (Venezuelan scorpion) protein is Toxin TdNa5.